Here is a 550-residue protein sequence, read N- to C-terminus: Methionine--tRNA ligase (550 aa).

The 'HIGH' region signature appears at 13 to 23 (PYANGPLHFGH). Residues Cys145, Cys148, Cys158, and Cys161 each coordinate Zn(2+). The short motif at 331 to 335 (QFSKS) is the 'KMSKS' region element. Lys334 provides a ligand contact to ATP.

It belongs to the class-I aminoacyl-tRNA synthetase family. MetG type 1 subfamily. In terms of assembly, monomer. The cofactor is Zn(2+).

Its subcellular location is the cytoplasm. The catalysed reaction is tRNA(Met) + L-methionine + ATP = L-methionyl-tRNA(Met) + AMP + diphosphate. Its function is as follows. Is required not only for elongation of protein synthesis but also for the initiation of all mRNA translation through initiator tRNA(fMet) aminoacylation. This is Methionine--tRNA ligase from Chlamydia trachomatis serovar L2b (strain UCH-1/proctitis).